The following is a 116-amino-acid chain: MKTRTEQRRLRHKRIVKKIRATNHDNRVVLMVIKSLNHISVQAWDFSQNIVLASSSSLALKLKNGNKDNAKLVGQDIADKLVKLKLTNVVFDTGGSKYHGRIAALAEAARERGLNF.

It belongs to the universal ribosomal protein uL18 family. As to quaternary structure, part of the 50S ribosomal subunit; part of the 5S rRNA/L5/L18/L25 subcomplex. Contacts the 5S and 23S rRNAs.

Its function is as follows. This is one of the proteins that bind and probably mediate the attachment of the 5S RNA into the large ribosomal subunit, where it forms part of the central protuberance. This is Large ribosomal subunit protein uL18 from Mycoplasma pneumoniae (strain ATCC 29342 / M129 / Subtype 1) (Mycoplasmoides pneumoniae).